The sequence spans 350 residues: Twinfilin-1 (350 aa).

S2 carries the post-translational modification N-acetylserine. The ADF-H 1 domain maps to 2–139; that stretch reads SHRTGIQASE…SLHGYKKYLL (138 aa). A phosphoserine mark is found at S143 and S277. In terms of domain architecture, ADF-H 2 spans 175 to 313; it reads LQGVAFPISR…TADFLYEEVH (139 aa). Position 309 is a phosphotyrosine (Y309). The disordered stretch occupies residues 316–350; sequence QHAHKQSFAKPKGPAGKRGIRRLIRGPAETEATTD. T349 bears the Phosphothreonine mark.

The protein belongs to the actin-binding proteins ADF family. Twinfilin subfamily. Interacts with G-actin; ADP-actin form and capping protein (CP). May also be able to interact with TWF2 and phosphoinositides, PI(4,5)P2. When bound to PI(4,5)P2, it is down-regulated. Interacts with ACTG1. Post-translationally, phosphorylated on serine and threonine residues.

It localises to the cytoplasm. It is found in the cytoskeleton. Functionally, actin-binding protein involved in motile and morphological processes. Inhibits actin polymerization, likely by sequestering G-actin. By capping the barbed ends of filaments, it also regulates motility. Seems to play an important role in clathrin-mediated endocytosis and distribution of endocytic organelles. The protein is Twinfilin-1 (TWF1) of Pongo abelii (Sumatran orangutan).